The following is a 60-amino-acid chain: Large ribosomal subunit protein uL30 (60 aa).

This sequence belongs to the universal ribosomal protein uL30 family. Part of the 50S ribosomal subunit.

The polypeptide is Large ribosomal subunit protein uL30 (Histophilus somni (strain 2336) (Haemophilus somnus)).